The chain runs to 289 residues: Bidirectional sugar transporter SWEET15 (289 aa).

The Extracellular segment spans residues 1–10 (MAMAMANHHT). The helical transmembrane segment at 11–31 (LGLIFGILGNIISFLVYFAPA) threads the bilayer. The MtN3/slv 1 domain maps to 14-100 (IFGILGNIIS…LYFFYAPMQA (87 aa)). Over 32–45 (PTFYRIYKRKSAEG) the chain is Cytoplasmic. Residues 46 to 66 (FHSLPYIVALFSAMLWLYYAL) traverse the membrane as a helical segment. Over 67–70 (LKKD) the chain is Extracellular. A helical membrane pass occupies residues 71-91 (AFLLITINSFGCAIESFYILL). The Cytoplasmic portion of the chain corresponds to 92 to 106 (YFFYAPMQAKKQTLK). A helical membrane pass occupies residues 107–127 (VVISLNVGVFSILVVLIQFLL). Residues 128–134 (KGSNRIN) lie on the Extracellular side of the membrane. A helical transmembrane segment spans residues 135–155 (VFGWICASFSVAVFAAPLSIV). Residues 136–219 (FGWICASFSV…VLYGFYRNAG (84 aa)) enclose the MtN3/slv 2 domain. The Cytoplasmic portion of the chain corresponds to 156–167 (AKVIRTKSVEFM). A helical membrane pass occupies residues 168 to 188 (PFSLSFFLTLSAIMWFAYGLL). Residues 189-193 (KNDPC) are Extracellular-facing. A helical membrane pass occupies residues 194–214 (VAIPNILGVILGLVQMVLYGF). Residues 215-289 (YRNAGKEKME…GELQPNGSTV (75 aa)) are Cytoplasmic-facing. Residues 249 to 289 (GAQQNGIKKSGSEDVKDDEETGNREKSTENSGELQPNGSTV) form a disordered region. The segment covering 277–289 (ENSGELQPNGSTV) has biased composition (polar residues).

It belongs to the SWEET sugar transporter family. As to quaternary structure, forms homooligomers and/or heterooligomers.

It is found in the cell membrane. Mediates both low-affinity uptake and efflux of sugar across the plasma membrane. The polypeptide is Bidirectional sugar transporter SWEET15 (Vitis vinifera (Grape)).